The primary structure comprises 425 residues: Serine--tRNA ligase (425 aa).

230–232 is an L-serine binding site; it reads TSE. 261–263 contributes to the ATP binding site; it reads RKE. L-serine is bound at residue glutamate 284. An ATP-binding site is contributed by 348 to 351; the sequence is EISS. L-serine is bound at residue serine 385.

The protein belongs to the class-II aminoacyl-tRNA synthetase family. Type-1 seryl-tRNA synthetase subfamily. Homodimer. The tRNA molecule binds across the dimer.

Its subcellular location is the cytoplasm. It catalyses the reaction tRNA(Ser) + L-serine + ATP = L-seryl-tRNA(Ser) + AMP + diphosphate + H(+). It carries out the reaction tRNA(Sec) + L-serine + ATP = L-seryl-tRNA(Sec) + AMP + diphosphate + H(+). Its pathway is aminoacyl-tRNA biosynthesis; selenocysteinyl-tRNA(Sec) biosynthesis; L-seryl-tRNA(Sec) from L-serine and tRNA(Sec): step 1/1. In terms of biological role, catalyzes the attachment of serine to tRNA(Ser). Is also able to aminoacylate tRNA(Sec) with serine, to form the misacylated tRNA L-seryl-tRNA(Sec), which will be further converted into selenocysteinyl-tRNA(Sec). This is Serine--tRNA ligase from Wolbachia pipientis wMel.